Reading from the N-terminus, the 327-residue chain is Quinone oxidoreductase (327 aa).

Belongs to the zinc-containing alcohol dehydrogenase family. Quinone oxidoreductase subfamily. In terms of assembly, homodimer.

The catalysed reaction is 2 a quinone + NADPH + H(+) = 2 a 1,4-benzosemiquinone + NADP(+). The protein is Quinone oxidoreductase (qor) of Salmonella typhimurium (strain LT2 / SGSC1412 / ATCC 700720).